An 881-amino-acid chain; its full sequence is Alanine--tRNA ligase (881 aa).

Zn(2+) contacts are provided by H566, H570, C668, and H672.

The protein belongs to the class-II aminoacyl-tRNA synthetase family. Requires Zn(2+) as cofactor.

It localises to the cytoplasm. It catalyses the reaction tRNA(Ala) + L-alanine + ATP = L-alanyl-tRNA(Ala) + AMP + diphosphate. Functionally, catalyzes the attachment of alanine to tRNA(Ala) in a two-step reaction: alanine is first activated by ATP to form Ala-AMP and then transferred to the acceptor end of tRNA(Ala). Also edits incorrectly charged Ser-tRNA(Ala) and Gly-tRNA(Ala) via its editing domain. This chain is Alanine--tRNA ligase, found in Frankia alni (strain DSM 45986 / CECT 9034 / ACN14a).